The chain runs to 333 residues: MFYDDDADLTIIQGRKVGVIGYGSQGHAHSLSLRDSGVQVKVGLKEGSKSRAKVSEQGLDVDTPAAVAKWADVIMLLAPDTAQADIFKNDIEPNLSDGDALFFGHGLNIHFGLIKPPAEVTVAMVAPKGPGHLVRRQFVDGKGVPCLIAVDQDPTGKGEALALSYAKAIGGTRAGVIKTTFKDETETDLFGEQAVLCGGTEELVKAGFDVMVEAGYPPEMAYFEVLHELKLIVDLMYEGGIARMNYSVSDTAEFGGYLSGPRVIDAGTKDRMREILRDIQNGDFVKKLVANVEGGNKQLEQLRKENAEHPIEVVGKRLRDLMSWVDRPITETA.

Positions 1–179 (MFYDDDADLT…GGTRAGVIKT (179 aa)) constitute a KARI N-terminal Rossmann domain. NADP(+)-binding positions include 22 to 25 (YGSQ), Lys45, Ser48, Ser50, and 80 to 83 (DTAQ). The active site involves His105. Gly131 contributes to the NADP(+) binding site. A KARI C-terminal knotted domain is found at 180-325 (TFKDETETDL…KRLRDLMSWV (146 aa)). Residues Asp188, Glu192, Glu224, and Glu228 each contribute to the Mg(2+) site. Position 249 (Ser249) interacts with substrate.

Belongs to the ketol-acid reductoisomerase family. Mg(2+) is required as a cofactor.

It carries out the reaction (2R)-2,3-dihydroxy-3-methylbutanoate + NADP(+) = (2S)-2-acetolactate + NADPH + H(+). The catalysed reaction is (2R,3R)-2,3-dihydroxy-3-methylpentanoate + NADP(+) = (S)-2-ethyl-2-hydroxy-3-oxobutanoate + NADPH + H(+). The protein operates within amino-acid biosynthesis; L-isoleucine biosynthesis; L-isoleucine from 2-oxobutanoate: step 2/4. It functions in the pathway amino-acid biosynthesis; L-valine biosynthesis; L-valine from pyruvate: step 2/4. Involved in the biosynthesis of branched-chain amino acids (BCAA). Catalyzes an alkyl-migration followed by a ketol-acid reduction of (S)-2-acetolactate (S2AL) to yield (R)-2,3-dihydroxy-isovalerate. In the isomerase reaction, S2AL is rearranged via a Mg-dependent methyl migration to produce 3-hydroxy-3-methyl-2-ketobutyrate (HMKB). In the reductase reaction, this 2-ketoacid undergoes a metal-dependent reduction by NADPH to yield (R)-2,3-dihydroxy-isovalerate. This Mycobacterium avium (strain 104) protein is Ketol-acid reductoisomerase (NADP(+)).